The chain runs to 360 residues: MTEKTPRKPASFTVSQASNRPEAADEAPRRPRAVRDLDVVVAQPDVFALSEEEAAELEILDPSFEAPERKGWSLSRILFGALGILVSFAIGIWTEDLIRALFSRADWLGWTALGVAIIALAAFIAIVVRELVALRRLASVQHLRKDAADAAERDDMAAARKAVDALRSIAAGLPETARGRQLLDGLTDDIIDGRNLIQLAETEILRPLDREARTLILNASKRVSIVTAISPRALVDIGYVIFESARLIRRLSQLYGGRPGTLGFLKLARRVIAHLAVTGTLAMGDSVIQQLVGHGLASRLSAKLGEGVVNGLMTARIGIAAMDVVRPFPFNAEKRPGIGDFIGDLVKINGERPDKKHPGK.

The disordered stretch occupies residues 1 to 30; the sequence is MTEKTPRKPASFTVSQASNRPEAADEAPRR. Transmembrane regions (helical) follow at residues 77 to 97 and 108 to 128; these read ILFGALGILVSFAIGIWTEDL and LGWTALGVAIIALAAFIAIVV.

This sequence belongs to the UPF0283 family.

It is found in the cell inner membrane. In Brucella anthropi (strain ATCC 49188 / DSM 6882 / CCUG 24695 / JCM 21032 / LMG 3331 / NBRC 15819 / NCTC 12168 / Alc 37) (Ochrobactrum anthropi), this protein is UPF0283 membrane protein Oant_2119.